Here is a 167-residue protein sequence, read N- to C-terminus: Modulator of smoothened protein (167 aa).

The next 4 membrane-spanning stretches (helical) occupy residues 7 to 29 (ISGC…PDWI), 68 to 88 (TLFF…LLVI), 101 to 121 (WIAF…PVGF), and 139 to 159 (VGSS…GLLF).

The protein resides in the cell projection. The protein localises to the cilium membrane. It is found in the cell membrane. Acts as a negative regulator of hedgehog signaling probably by promoting internalization and subsequent degradation of smoothened protein (SMO) present in the ciliary membrane. Plays a role in sonic hedgehog (SHH)-induced spinal neural progenitor cells differentiation. This chain is Modulator of smoothened protein, found in Danio rerio (Zebrafish).